A 259-amino-acid polypeptide reads, in one-letter code: Acyl-[acyl-carrier-protein]--UDP-N-acetylglucosamine O-acyltransferase (259 aa).

The protein belongs to the transferase hexapeptide repeat family. LpxA subfamily. Homotrimer.

It is found in the cytoplasm. It carries out the reaction a (3R)-hydroxyacyl-[ACP] + UDP-N-acetyl-alpha-D-glucosamine = a UDP-3-O-[(3R)-3-hydroxyacyl]-N-acetyl-alpha-D-glucosamine + holo-[ACP]. The protein operates within glycolipid biosynthesis; lipid IV(A) biosynthesis; lipid IV(A) from (3R)-3-hydroxytetradecanoyl-[acyl-carrier-protein] and UDP-N-acetyl-alpha-D-glucosamine: step 1/6. In terms of biological role, involved in the biosynthesis of lipid A, a phosphorylated glycolipid that anchors the lipopolysaccharide to the outer membrane of the cell. The sequence is that of Acyl-[acyl-carrier-protein]--UDP-N-acetylglucosamine O-acyltransferase from Psychrobacter sp. (strain PRwf-1).